The primary structure comprises 301 residues: Acetylglutamate kinase (301 aa).

Substrate contacts are provided by residues 68-69 (GG), arginine 90, and asparagine 195.

Belongs to the acetylglutamate kinase family. ArgB subfamily.

It localises to the cytoplasm. The enzyme catalyses N-acetyl-L-glutamate + ATP = N-acetyl-L-glutamyl 5-phosphate + ADP. It functions in the pathway amino-acid biosynthesis; L-arginine biosynthesis; N(2)-acetyl-L-ornithine from L-glutamate: step 2/4. Catalyzes the ATP-dependent phosphorylation of N-acetyl-L-glutamate. The chain is Acetylglutamate kinase from Pseudomonas putida (strain ATCC 700007 / DSM 6899 / JCM 31910 / BCRC 17059 / LMG 24140 / F1).